The sequence spans 247 residues: Segregation and condensation protein A (247 aa).

This sequence belongs to the ScpA family. As to quaternary structure, component of a cohesin-like complex composed of ScpA, ScpB and the Smc homodimer, in which ScpA and ScpB bind to the head domain of Smc. The presence of the three proteins is required for the association of the complex with DNA.

It localises to the cytoplasm. In terms of biological role, participates in chromosomal partition during cell division. May act via the formation of a condensin-like complex containing Smc and ScpB that pull DNA away from mid-cell into both cell halves. The sequence is that of Segregation and condensation protein A from Bacillus cereus (strain G9842).